A 452-amino-acid chain; its full sequence is MSLMQFSGLLVVWLLSTLFIATLTWFEFRRVRFNFNVFFSLLFLLTFFFGFPLTSVLVFRFDVGVAPPEILLQALLSAACFYGVYYVTYKTRLRKRVVDVPRKPLFTMNRVETHLTWVILMGIALVSVAIFFMHNGFLLFRLHSYSQIFSSEVSGVALKRFFYFFIPAMLVVYFLRQDSKAWLFFLVSTVAFGLLTYMIVGGTRANIIIAFAIFLFIGIIRGWISLWMLVAAGVLGIVGMFWLALKRYGLNVSGDEAFYTFLYLTRDTFSPWENLALLLQNYHNIDFQGLAPIVRDFYVFIPTWLWPGRPSIVLNSANYFTWEVLNNHSGLAISPTLIGSLVVMGGALFIPLGAIVVGLIIKWFDWLYELGNREPNRYKAAILHSFCFGAIFNMIVLAREGLDSFVSRVVFFLVVFGASLLVAKLLFWLFDSAGLIHKRTTSLPQAQVEGKL.

A run of 11 helical transmembrane segments spans residues 6–26 (FSGL…LTWF), 37–57 (VFFS…TSVL), 63–83 (VGVA…CFYG), 118–138 (VILM…NGFL), 155–175 (GVAL…VYFL), 181–201 (AWLF…MIVG), 207–227 (IIIA…ISLW), 228–248 (MLVA…LKRY), 341–361 (LVVM…GLII), 378–398 (YKAA…IVLA), and 410–430 (VFFL…FWLF).

It belongs to the WzyE family. As to quaternary structure, probably part of a complex composed of WzxE, WzyE and WzzE.

The protein resides in the cell inner membrane. It participates in bacterial outer membrane biogenesis; enterobacterial common antigen biosynthesis. Probably involved in the polymerization of enterobacterial common antigen (ECA) trisaccharide repeat units. The polypeptide is Probable ECA polymerase (Salmonella agona (strain SL483)).